A 393-amino-acid chain; its full sequence is Synaptic vesicle membrane protein VAT-1 homolog (393 aa).

Positions 1–40 are disordered; the sequence is MSDEREVAEAATGEDASSPPPKTEAASDPQHPAASEGAAA. Position 2 is an N-acetylserine (S2). A phosphoserine mark is found at S2, S18, S27, S35, and S44.

Belongs to the zinc-containing alcohol dehydrogenase family. Quinone oxidoreductase subfamily. As to expression, expressed in brain. Also expressed in glioblastoma cells.

It is found in the cytoplasm. Its subcellular location is the mitochondrion outer membrane. Possesses ATPase activity. Plays a part in calcium-regulated keratinocyte activation in epidermal repair mechanisms. Has no effect on cell proliferation. Negatively regulates mitochondrial fusion in cooperation with mitofusin proteins (MFN1-2). This Homo sapiens (Human) protein is Synaptic vesicle membrane protein VAT-1 homolog (VAT1).